The sequence spans 151 residues: Large ribosomal subunit protein bL28c (151 aa).

A chloroplast-targeting transit peptide spans 1-74 (MATMVAGISL…PFKPSLQPVA (74 aa)).

The protein belongs to the bacterial ribosomal protein bL28 family. As to quaternary structure, part of the 50S ribosomal subunit.

It is found in the plastid. It localises to the chloroplast. The protein is Large ribosomal subunit protein bL28c (RPL28) of Nicotiana tabacum (Common tobacco).